A 492-amino-acid chain; its full sequence is Ketol-acid reductoisomerase (NADP(+)) (492 aa).

One can recognise a KARI N-terminal Rossmann domain in the interval 15–208 (AQLGKCRFMA…GGHRAGVLEF (194 aa)). NADP(+)-binding positions include 45–48 (CGAQ), Arg-68, Arg-76, Ser-78, and 108–110 (DKQ). His-132 is a catalytic residue. Gly-158 is a binding site for NADP(+). KARI C-terminal knotted domains lie at 209–344 (SFVA…NAPQ) and 345–485 (FEGK…MTDM). The Mg(2+) site is built by Asp-217, Glu-221, Glu-389, and Glu-393. Position 414 (Ser-414) interacts with substrate.

This sequence belongs to the ketol-acid reductoisomerase family. It depends on Mg(2+) as a cofactor.

It catalyses the reaction (2R)-2,3-dihydroxy-3-methylbutanoate + NADP(+) = (2S)-2-acetolactate + NADPH + H(+). The catalysed reaction is (2R,3R)-2,3-dihydroxy-3-methylpentanoate + NADP(+) = (S)-2-ethyl-2-hydroxy-3-oxobutanoate + NADPH + H(+). The protein operates within amino-acid biosynthesis; L-isoleucine biosynthesis; L-isoleucine from 2-oxobutanoate: step 2/4. Its pathway is amino-acid biosynthesis; L-valine biosynthesis; L-valine from pyruvate: step 2/4. Functionally, involved in the biosynthesis of branched-chain amino acids (BCAA). Catalyzes an alkyl-migration followed by a ketol-acid reduction of (S)-2-acetolactate (S2AL) to yield (R)-2,3-dihydroxy-isovalerate. In the isomerase reaction, S2AL is rearranged via a Mg-dependent methyl migration to produce 3-hydroxy-3-methyl-2-ketobutyrate (HMKB). In the reductase reaction, this 2-ketoacid undergoes a metal-dependent reduction by NADPH to yield (R)-2,3-dihydroxy-isovalerate. This Yersinia pestis bv. Antiqua (strain Antiqua) protein is Ketol-acid reductoisomerase (NADP(+)).